A 363-amino-acid chain; its full sequence is Protein CPn_1058/CP_0792/CPj1058/CpB1100 (363 aa).

An N-terminal signal peptide occupies residues Met1–Ala27.

The protein belongs to the chlamydial CPn_1058/CT_355/TC_0634 family.

This chain is Protein CPn_1058/CP_0792/CPj1058/CpB1100, found in Chlamydia pneumoniae (Chlamydophila pneumoniae).